The following is a 306-amino-acid chain: Ribosomal protein L11 methyltransferase (306 aa).

S-adenosyl-L-methionine contacts are provided by Thr-139, Gly-173, Asp-195, and Asn-242.

It belongs to the methyltransferase superfamily. PrmA family.

The protein localises to the cytoplasm. The enzyme catalyses L-lysyl-[protein] + 3 S-adenosyl-L-methionine = N(6),N(6),N(6)-trimethyl-L-lysyl-[protein] + 3 S-adenosyl-L-homocysteine + 3 H(+). Functionally, methylates ribosomal protein L11. The sequence is that of Ribosomal protein L11 methyltransferase from Trichormus variabilis (strain ATCC 29413 / PCC 7937) (Anabaena variabilis).